The chain runs to 491 residues: MKLNELMQAIPVFTGEASETIEISHIAQDSRKVKPGTLFICIDGELVDGHQFASRAVELGAVAIIAEKQLDVSIPVIYVRDSKRAMAMLADYFYGSPTQALKLVGITGTNGKTTVSHLVEQIVRENGEQTGLIGTMYRKIGDQILETKNTTPDSLTLQETFRDMLLSGVSTAVMEVSSHALVQGRVYGSDYDVAVFMNLSQDHLDYHHTMEEYANAKSLLFAQLGNSYHTSNPKIAVLNADDEESVRMQKATAAHVITFGIKQQADFKANNIRITSHGSTFDLRTPIGNFTLKIKMIGNFSVYNVLAAIATSFALHIPMEKAIKTVESIPGVKGRFELVHAGQEFPVIVDYAHTPDGLLNVLETIAEFAEKRVFVVVGCGGDRDKGKRPQMAKIAVDYATNPIFTSDNPRSENPRAIIEDMIQGVPYSDSYVVHENRRDAIRFAVNEAEAGDVILIAGKGHEDYQVIGDEVIDFDDRVEARIAIEKKLGLA.

S30 contacts UDP-N-acetyl-alpha-D-muramoyl-L-alanyl-D-glutamate. Position 108-114 (108-114 (GTNGKTT)) interacts with ATP. UDP-N-acetyl-alpha-D-muramoyl-L-alanyl-D-glutamate is bound by residues N149, 150-151 (TT), S177, Q183, and R185. K217 carries the post-translational modification N6-carboxylysine. Meso-2,6-diaminopimelate is bound by residues R383, 407-410 (DNPR), G458, and E462. The Meso-diaminopimelate recognition motif motif lies at 407 to 410 (DNPR).

Belongs to the MurCDEF family. MurE subfamily. The cofactor is Mg(2+). Post-translationally, carboxylation is probably crucial for Mg(2+) binding and, consequently, for the gamma-phosphate positioning of ATP.

It localises to the cytoplasm. The catalysed reaction is UDP-N-acetyl-alpha-D-muramoyl-L-alanyl-D-glutamate + meso-2,6-diaminopimelate + ATP = UDP-N-acetyl-alpha-D-muramoyl-L-alanyl-gamma-D-glutamyl-meso-2,6-diaminopimelate + ADP + phosphate + H(+). It participates in cell wall biogenesis; peptidoglycan biosynthesis. Catalyzes the addition of meso-diaminopimelic acid to the nucleotide precursor UDP-N-acetylmuramoyl-L-alanyl-D-glutamate (UMAG) in the biosynthesis of bacterial cell-wall peptidoglycan. The chain is UDP-N-acetylmuramoyl-L-alanyl-D-glutamate--2,6-diaminopimelate ligase from Listeria monocytogenes serotype 4b (strain F2365).